Reading from the N-terminus, the 450-residue chain is MEQAPPDPERQLQPAPLEPLGSPDAVLGAAVGKETEGAGEESSGVDTMTHNNFWLKKIEISVSEAEKRTGRNAMNMQETYTAYLIETRSIEHTDGQSVLTDSLWRRYSEFELLRSYLLVYYPHIVVPPLPEKRAEFVWHKLSADNMDPDFVERRRIGLENFLLRIASHPLLCRDKIFYLFLTQEGNWKETVNETGFQLKADSRLKALNATFRVKNPDKRFTDLKHYSDELQSVISHLLRVRARVADRLYGVYKVHGNYGRVFSEWSAIEKEMGDGLQSAGHHMDVYASSIDDILEDEEHYADQLKEYLFYAEALRAVCRKHELMQYDLEMAAQDLASKKQQCEELATGTVRTFSLKGMTTKLFGQETPEQREARIKVLEEQINEGEQQLKSKNLEGREFVKNAWADIERFKEQKNRDLKEALISYAVMQISMCKKGIQVWTNAKECFSKM.

An N-acetylmethionine modification is found at Met1. Residues Met1 to Asp46 are disordered. A Phosphoserine modification is found at Ser22. Residues Ser61–Trp187 enclose the PX domain. Residues Arg106, Ser108, Lys132, and Arg154 each contribute to the a 1,2-diacyl-sn-glycero-3-phospho-(1D-myo-inositol-3-phosphate) site.

It belongs to the sorting nexin family. As to quaternary structure, heterodimer; heterodimerizes with SNX7 or SNX30. Interacts with WWC1/KIBRA. Identified in a complex with WWC1/KIBRA and dynein components DYNLL1 and DYNC1I2. Interacts with BIN1.

The protein resides in the early endosome. It localises to the early endosome membrane. Involved in the regulation of endocytosis and in several stages of intracellular trafficking. Plays a role in recycling endocytosed transferrin receptor and prevent its degradation. Involved in autophagosome assembly by regulating trafficking and recycling of phospholipid scramblase ATG9A. This chain is Sorting nexin-4, found in Pongo abelii (Sumatran orangutan).